The primary structure comprises 110 residues: DNA-binding protein Pars_1791 (110 aa).

The protein belongs to the PDCD5 family.

This Pyrobaculum arsenaticum (strain DSM 13514 / JCM 11321 / PZ6) protein is DNA-binding protein Pars_1791.